The sequence spans 331 residues: 2-keto-3-deoxygluconate permease (331 aa).

10 consecutive transmembrane segments (helical) span residues 10–30 (IPGG…TLAP), 42–62 (GMIS…GASI), 77–97 (LVLT…MFIP), 100–120 (GIQT…AMDM), 141–161 (AFVL…LGSA), 163–183 (LASF…IGFA), 200–220 (PVLI…NVIM), 224–244 (LLGI…LIIA), 254–274 (TAGV…MIIA), and 289–309 (ALVA…TALY).

It belongs to the KdgT transporter family.

The protein resides in the cell inner membrane. It carries out the reaction 2-dehydro-3-deoxy-D-gluconate(in) + H(+)(in) = 2-dehydro-3-deoxy-D-gluconate(out) + H(+)(out). Its function is as follows. Catalyzes the proton-dependent uptake of 2-keto-3-deoxygluconate (KDG) into the cell. The sequence is that of 2-keto-3-deoxygluconate permease from Enterobacter sp. (strain 638).